We begin with the raw amino-acid sequence, 337 residues long: S-adenosylmethionine:tRNA ribosyltransferase-isomerase (337 aa).

Belongs to the QueA family. In terms of assembly, monomer.

It is found in the cytoplasm. It catalyses the reaction 7-aminomethyl-7-carbaguanosine(34) in tRNA + S-adenosyl-L-methionine = epoxyqueuosine(34) in tRNA + adenine + L-methionine + 2 H(+). It functions in the pathway tRNA modification; tRNA-queuosine biosynthesis. In terms of biological role, transfers and isomerizes the ribose moiety from AdoMet to the 7-aminomethyl group of 7-deazaguanine (preQ1-tRNA) to give epoxyqueuosine (oQ-tRNA). The protein is S-adenosylmethionine:tRNA ribosyltransferase-isomerase of Legionella pneumophila (strain Paris).